A 261-amino-acid polypeptide reads, in one-letter code: Adenosylcobinamide-GDP ribazoletransferase (261 aa).

A run of 5 helical transmembrane segments spans residues 31 to 51 (YAIC…FLTF), 59 to 79 (LGDI…SGGI), 125 to 145 (FGMV…FFVV), 183 to 203 (VIYL…LTVV), and 240 to 260 (LMAG…TGHW).

The protein belongs to the CobS family. It depends on Mg(2+) as a cofactor.

It localises to the cell membrane. The catalysed reaction is alpha-ribazole + adenosylcob(III)inamide-GDP = adenosylcob(III)alamin + GMP + H(+). It catalyses the reaction alpha-ribazole 5'-phosphate + adenosylcob(III)inamide-GDP = adenosylcob(III)alamin 5'-phosphate + GMP + H(+). It functions in the pathway cofactor biosynthesis; adenosylcobalamin biosynthesis; adenosylcobalamin from cob(II)yrinate a,c-diamide: step 7/7. Joins adenosylcobinamide-GDP and alpha-ribazole to generate adenosylcobalamin (Ado-cobalamin). Also synthesizes adenosylcobalamin 5'-phosphate from adenosylcobinamide-GDP and alpha-ribazole 5'-phosphate. The polypeptide is Adenosylcobinamide-GDP ribazoletransferase (Lachnoclostridium phytofermentans (strain ATCC 700394 / DSM 18823 / ISDg) (Clostridium phytofermentans)).